The primary structure comprises 140 residues: Short-chain diamines transporter (140 aa).

4 helical membrane-spanning segments follow: residues 7–27 (IFHAVLFELMALAIIVPAAAL), 36–56 (LALVGIGLSLYTVVWNYIYNL), 79–99 (VGFEGGLIFISIPVIAWFLEI), and 105–125 (LMLEAGFLVFFLFYATGFNWL).

This sequence belongs to the proteobacterial antimicrobial compound efflux (PACE) (TC 2.A.117) family.

It is found in the cell inner membrane. In terms of biological role, mediates the efflux of short-chain diamines when energized by an electrochemical gradient. Confers resistance to chlorhexidine, benzalkonium, proflavine and acriflavine. Mediates efflux of both proflavine and acriflavine via an energy-dependent mechanism. The protein is Short-chain diamines transporter of Vibrio parahaemolyticus serotype O3:K6 (strain RIMD 2210633).